We begin with the raw amino-acid sequence, 65 residues long: Large ribosomal subunit protein bL28 (65 aa).

This sequence belongs to the bacterial ribosomal protein bL28 family.

The polypeptide is Large ribosomal subunit protein bL28 (Lachnoclostridium phytofermentans (strain ATCC 700394 / DSM 18823 / ISDg) (Clostridium phytofermentans)).